The primary structure comprises 857 residues: Inactive rhomboid protein 1 (857 aa).

Residues 1–413 (MAELRRDSTS…HRPFFTYWIT (413 aa)) lie on the Cytoplasmic side of the membrane. Positions 283-307 (FESPSDSTMKDVDSKQLDESELTGS) are disordered. Over residues 290-300 (TMKDVDSKQLD) the composition is skewed to basic and acidic residues. A helical membrane pass occupies residues 414–434 (FVHILITILAVCIYGIAPVGF). The Lumenal portion of the chain corresponds to 435 to 661 (SQHETVDSVL…PDQFYRLWLS (227 aa)). An N-linked (GlcNAc...) asparagine glycan is attached at N585. A helical transmembrane segment spans residues 662-682 (LFLHAGILHCLVSVCFQMTIL). Over 683-693 (RDLEKLAGWLR) the chain is Cytoplasmic. A helical transmembrane segment spans residues 694–714 (ISIIYILSGITGNLASAIFLP). At 715 to 716 (YR) the chain is on the lumenal side. The chain crosses the membrane as a helical span at residues 717–737 (AEVGPAGSQFGILACLFVELI). Over 738–748 (QSWQILAQPWR) the chain is Cytoplasmic. Residues 749-769 (AFTKLLCVVLFLFAFGLLPWI) form a helical membrane-spanning segment. Over 770–774 (DNFAH) the chain is Lumenal. Residues 775–795 (ISGFISGFFLSFAFLPYISFG) traverse the membrane as a helical segment. At 796–805 (RLDMYRKRCQ) the chain is on the cytoplasmic side. The chain crosses the membrane as a helical span at residues 806-826 (IIIFLVVFLGLFAGLVVLFYV). The Lumenal segment spans residues 827–857 (HPIKCEWCELLTCIPFTDKFCEKYDLNAHLH).

The protein belongs to the peptidase S54 family.

It is found in the endoplasmic reticulum membrane. Its subcellular location is the golgi apparatus membrane. Its function is as follows. Regulates ADAM17 protease, a sheddase of the epidermal growth factor (EGF) receptor ligands and TNF, thereby plays a role in sleep, cell survival, proliferation, migration and inflammation. Does not exhibit any protease activity on its own. The protein is Inactive rhomboid protein 1 (rhbdf1) of Danio rerio (Zebrafish).